Here is a 279-residue protein sequence, read N- to C-terminus: Conserved oligomeric Golgi complex subunit 7 (279 aa).

In terms of assembly, component of the conserved oligomeric Golgi (COG or Sec34/Sec35) complex which consists of eight different proteins COG1-COG8.

The protein resides in the golgi apparatus membrane. In terms of biological role, acts as a component of the peripheral membrane COG complex that is involved in intra-Golgi protein trafficking. COG is located at the cis-Golgi, and regulates tethering of retrograde intra-Golgi vesicles and possibly a number of other membrane trafficking events. This chain is Conserved oligomeric Golgi complex subunit 7 (COG7), found in Saccharomyces cerevisiae (strain ATCC 204508 / S288c) (Baker's yeast).